We begin with the raw amino-acid sequence, 161 residues long: Cytochrome c-type biogenesis protein CcmE (161 aa).

Residues 1-8 lie on the Cytoplasmic side of the membrane; sequence MNPRRKKR. A helical; Signal-anchor for type II membrane protein transmembrane segment spans residues 9–29; it reads LTLAVALIAGVAAVASLLLYA. Over 30-161 the chain is Periplasmic; the sequence is LNSNLNLFYT…TYNQKALEDK (132 aa). Heme contacts are provided by H131 and Y135. Residues 142-161 are disordered; sequence EAMGQTHEKPTYNQKALEDK. Residues 147-161 show a composition bias toward basic and acidic residues; sequence THEKPTYNQKALEDK.

Belongs to the CcmE/CycJ family.

The protein localises to the cell inner membrane. Functionally, heme chaperone required for the biogenesis of c-type cytochromes. Transiently binds heme delivered by CcmC and transfers the heme to apo-cytochromes in a process facilitated by CcmF and CcmH. This is Cytochrome c-type biogenesis protein CcmE from Shewanella frigidimarina (strain NCIMB 400).